The chain runs to 108 residues: uncharacterized protein (108 aa).

Over residues Gly39–Pro68 the composition is skewed to low complexity. Positions Gly39–Trp95 are disordered. Over residues Arg69 to Pro80 the composition is skewed to basic residues.

This is an uncharacterized protein from Acidithiobacillus ferridurans.